The following is a 185-amino-acid chain: Ribosome-recycling factor (185 aa).

The protein belongs to the RRF family.

The protein resides in the cytoplasm. In terms of biological role, responsible for the release of ribosomes from messenger RNA at the termination of protein biosynthesis. May increase the efficiency of translation by recycling ribosomes from one round of translation to another. The protein is Ribosome-recycling factor of Heliobacterium modesticaldum (strain ATCC 51547 / Ice1).